A 192-amino-acid chain; its full sequence is MLSFLSSNLSSTRQSLAQVLNFALVLSTAFMLWKGLSVFTASSSPIVVVLSGSMEPAFQRGDLLFLWNRSPRAELGEIVVYNVRGKDIPIVHRVVRTFPQIEGKAKKVKEVTEASSVPPNMLLTKGDNNIADDTELYAKNQDFLHREEDIVGSVRGYMPMVGYVTIMLSEHPWLKTVLLGIMGLMVILQREQ.

Residues 1–18 lie on the Cytoplasmic side of the membrane; that stretch reads MLSFLSSNLSSTRQSLAQ. A helical; Signal-anchor for type II membrane protein membrane pass occupies residues 19–39; sequence VLNFALVLSTAFMLWKGLSVF. Over 40–192 the chain is Lumenal; that stretch reads TASSSPIVVV…GLMVILQREQ (153 aa). Active-site charge relay system residues include serine 53, histidine 92, and aspartate 133. The C-terminal short (CTS) helix stretch occupies residues 177 to 188; it reads VLLGIMGLMVIL.

The protein belongs to the peptidase S26B family. Component of the signal peptidase complex (SPC) composed of a catalytic subunit SEC11 and three accessory subunits SPC1, SPC2 and SPC3. The complex induces a local thinning of the ER membrane which is used to measure the length of the signal peptide (SP) h-region of protein substrates. This ensures the selectivity of the complex towards h-regions shorter than 18-20 amino acids. SPC associates with the translocon complex.

Its subcellular location is the endoplasmic reticulum membrane. The enzyme catalyses Cleavage of hydrophobic, N-terminal signal or leader sequences from secreted and periplasmic proteins.. In terms of biological role, catalytic component of the signal peptidase complex (SPC) which catalyzes the cleavage of N-terminal signal sequences from nascent proteins as they are translocated into the lumen of the endoplasmic reticulum. Specifically cleaves N-terminal signal peptides that contain a hydrophobic alpha-helix (h-region) shorter than 18-20 amino acids. The chain is Signal peptidase complex catalytic subunit sec11 (sec11) from Neosartorya fischeri (strain ATCC 1020 / DSM 3700 / CBS 544.65 / FGSC A1164 / JCM 1740 / NRRL 181 / WB 181) (Aspergillus fischerianus).